Reading from the N-terminus, the 99-residue chain is uncharacterized protein (99 aa).

Its subcellular location is the mitochondrion. This is an uncharacterized protein from Marchantia polymorpha (Common liverwort).